Here is a 708-residue protein sequence, read N- to C-terminus: Ribosomal RNA large subunit methyltransferase K/L (708 aa).

A THUMP domain is found at 43–154 (QGYQITLWTR…RGKITIGINF (112 aa)).

The protein belongs to the methyltransferase superfamily. RlmKL family.

The protein resides in the cytoplasm. The catalysed reaction is guanosine(2445) in 23S rRNA + S-adenosyl-L-methionine = N(2)-methylguanosine(2445) in 23S rRNA + S-adenosyl-L-homocysteine + H(+). The enzyme catalyses guanosine(2069) in 23S rRNA + S-adenosyl-L-methionine = N(2)-methylguanosine(2069) in 23S rRNA + S-adenosyl-L-homocysteine + H(+). Its function is as follows. Specifically methylates the guanine in position 2445 (m2G2445) and the guanine in position 2069 (m7G2069) of 23S rRNA. The chain is Ribosomal RNA large subunit methyltransferase K/L from Shewanella amazonensis (strain ATCC BAA-1098 / SB2B).